The following is a 185-amino-acid chain: A-type ATP synthase subunit E (185 aa).

It belongs to the V-ATPase E subunit family. In terms of assembly, has multiple subunits with at least A(3), B(3), C, D, E, F, H, I and proteolipid K(x).

Its subcellular location is the cell membrane. Component of the A-type ATP synthase that produces ATP from ADP in the presence of a proton gradient across the membrane. The chain is A-type ATP synthase subunit E from Thermoplasma volcanium (strain ATCC 51530 / DSM 4299 / JCM 9571 / NBRC 15438 / GSS1).